The sequence spans 423 residues: UDP-N-acetylglucosamine 1-carboxyvinyltransferase (423 aa).

A phosphoenolpyruvate-binding site is contributed by 21–22 (KN). Arginine 92 contributes to the UDP-N-acetyl-alpha-D-glucosamine binding site. Cysteine 116 (proton donor) is an active-site residue. Position 116 is a 2-(S-cysteinyl)pyruvic acid O-phosphothioketal (cysteine 116). Positions 305 and 327 each coordinate UDP-N-acetyl-alpha-D-glucosamine.

This sequence belongs to the EPSP synthase family. MurA subfamily.

It is found in the cytoplasm. It catalyses the reaction phosphoenolpyruvate + UDP-N-acetyl-alpha-D-glucosamine = UDP-N-acetyl-3-O-(1-carboxyvinyl)-alpha-D-glucosamine + phosphate. Its pathway is cell wall biogenesis; peptidoglycan biosynthesis. Functionally, cell wall formation. Adds enolpyruvyl to UDP-N-acetylglucosamine. This Fervidobacterium nodosum (strain ATCC 35602 / DSM 5306 / Rt17-B1) protein is UDP-N-acetylglucosamine 1-carboxyvinyltransferase.